The chain runs to 349 residues: Ribonucleoside-diphosphate reductase small chain (349 aa).

Residues D99, E130, and H133 each coordinate Fe cation. Y137 is an active-site residue. Fe cation is bound by residues E192, E226, and H229.

This sequence belongs to the ribonucleoside diphosphate reductase small chain family. Heterodimer of a large and a small subunit. Requires Fe cation as cofactor.

It carries out the reaction a 2'-deoxyribonucleoside 5'-diphosphate + [thioredoxin]-disulfide + H2O = a ribonucleoside 5'-diphosphate + [thioredoxin]-dithiol. In terms of biological role, provides the precursors necessary for DNA synthesis. Catalyzes the biosynthesis of deoxyribonucleotides from the corresponding ribonucleotides. This is Ribonucleoside-diphosphate reductase small chain (RNR2) from Plasmodium falciparum (isolate Dd2).